The sequence spans 412 residues: tRNA pseudouridine synthase Pus10 (412 aa).

In terms of domain architecture, THUMP spans 73-197 (HEPSIKFLSN…TGSVEVQIMP (125 aa)). Substrate is bound by residues Tyr308 and Tyr376.

The protein belongs to the pseudouridine synthase Pus10 family.

The enzyme catalyses uridine(54) in tRNA = pseudouridine(54) in tRNA. It catalyses the reaction uridine(55) in tRNA = pseudouridine(55) in tRNA. Its function is as follows. Responsible for synthesis of pseudouridine from uracil-54 and uracil-55 in the psi GC loop of transfer RNAs. The polypeptide is tRNA pseudouridine synthase Pus10 (Vulcanisaeta distributa (strain DSM 14429 / JCM 11212 / NBRC 100878 / IC-017)).